We begin with the raw amino-acid sequence, 417 residues long: MNIIDELKWRGALNQATDEEGLRELTEEKKIALYCGTDPSGDSLHIGHLIPFMMLKRFQLAGHKPVILIGGGTGAIGDPSGRKTERDLETRSKLEQNVQSLTKQMIRLFGTENFTIVNNYDWLSKFTMIDFLRDYGKLFNLNTMLNKEVVASRLDAGISFTEFTYQILQAIDFLHLYRHNDVQLQIGGSDQWGNITSGIDLIHKVEGSDTKVFGVTIPLMLKADGTKFGKTAGGAVWLDPEKTSPYEFYQFWLNQDDRDVVKYLKYFTFLSQEEIAGLEEKVQTEPWKREAQRRLAQEVTTFVHGQAATDQAEKISAILFSGNIQDLTTAEVEQAFAGTPSVEVSAEPANIVDWLVDTKIEPSKRQAREDVKNGAIRVNGEKVTDLEATLDPTAKFDGKYVVIRRGKKNYTLAKVHA.

Residue Tyr-34 participates in L-tyrosine binding. The 'HIGH' region signature appears at 39-48; that stretch reads PSGDSLHIGH. Tyr-165 and Gln-169 together coordinate L-tyrosine. The short motif at 227-231 is the 'KMSKS' region element; sequence KFGKT. Residue Lys-230 coordinates ATP. The S4 RNA-binding domain maps to 349-415; sequence ANIVDWLVDT…GKKNYTLAKV (67 aa).

This sequence belongs to the class-I aminoacyl-tRNA synthetase family. TyrS type 1 subfamily. Homodimer.

The protein localises to the cytoplasm. The catalysed reaction is tRNA(Tyr) + L-tyrosine + ATP = L-tyrosyl-tRNA(Tyr) + AMP + diphosphate + H(+). In terms of biological role, catalyzes the attachment of tyrosine to tRNA(Tyr) in a two-step reaction: tyrosine is first activated by ATP to form Tyr-AMP and then transferred to the acceptor end of tRNA(Tyr). The chain is Tyrosine--tRNA ligase from Limosilactobacillus fermentum (strain NBRC 3956 / LMG 18251) (Lactobacillus fermentum).